Here is an 89-residue protein sequence, read N- to C-terminus: Small ribosomal subunit protein uS15 (89 aa).

Belongs to the universal ribosomal protein uS15 family. Part of the 30S ribosomal subunit. Forms a bridge to the 50S subunit in the 70S ribosome, contacting the 23S rRNA.

One of the primary rRNA binding proteins, it binds directly to 16S rRNA where it helps nucleate assembly of the platform of the 30S subunit by binding and bridging several RNA helices of the 16S rRNA. Functionally, forms an intersubunit bridge (bridge B4) with the 23S rRNA of the 50S subunit in the ribosome. This is Small ribosomal subunit protein uS15 from Bacillus licheniformis (strain ATCC 14580 / DSM 13 / JCM 2505 / CCUG 7422 / NBRC 12200 / NCIMB 9375 / NCTC 10341 / NRRL NRS-1264 / Gibson 46).